The primary structure comprises 607 residues: Autophagy-related protein 16-1 (607 aa).

An interaction with ATG5 region spans residues 13–43 (WKRHISEQLRRRDRLQRQAFEEIILQYNKLL). The stretch at 79 to 230 (DSQLQEMAQL…QKELAEAAKE (152 aa)) forms a coiled coil. Serine 139 is modified (phosphoserine). Residues 207–230 (AENEKDSRRRQARLQKELAEAAKE) are WIPI2-binding. The RB1CC1-binding stretch occupies residues 230–242 (EPLPVEQDDDIEV). Phosphoserine is present on residues serine 269 and serine 287. The short motif at 296–299 (DNVD) is the Caspase cleavage element. 7 WD repeats span residues 320–359 (AHDGEVNAVQFSPGSRLLATGGMDRRVKLWEVFGEKCEFK), 364–403 (GSNAGITSIEFDSAGSYLLAASNDFASRIWTVDDSRLRHT), 406–445 (GHSGKVLSAKFLLDNARIVSGSHDRTLKHWDLRSKVCIKT), 447–484 (FAGSSCNDIVCTEQCVMSGHFDKKIRFWDIRSESIVRE), 486–525 (ELLGKITALDLNPERTELLSCSRDDLLKVIDLRTNAIKQT), 532–573 (KCGS…KVLS), and 575–607 (QHSSSINAVAWSPSGLHVVSVDKGCKAVLWAQY).

The protein belongs to the WD repeat ATG16 family. Homodimer. Homooligomer. Heterooligomer with ATG16L2. Interacts with WIPI1. Interacts with WIPI2. Interacts with RB1CC1; the interaction is required for ULK1 complex-dependent autophagy. Interacts with ATG5. Part of the minor complex composed of 4 sets of ATG12-ATG5 and ATG16L1 (400 kDa); this complex interacts with ATG3 leading to disruption of ATG7 interaction and promotion of ATG8-like proteins lipidation. Part of the major complex composed of 8 sets of ATG12-ATG5 and ATG16L1 (800 kDa). Interacts with RAB33B (GTP- and GDP-bound forms); the complex consists of a tetramer where two RAB33B molecules bind independently one molecule of the ATG16L1 homodimer; the interaction promotes ATG12-ATG5-ATG16L1 complex recruitment to phagophores. Interacts (via WD repeats) with TMEM59; the interaction mediates unconventional autophagic activity of TMEM59. Interacts with TLR2. Interacts (via WD repeats) with MEFV. Interacts with PPP1CA; the interaction dephosphorylates ATG16L1 causing dissociation of ATG12-ATG5-ATG16L1 complex. Interacts (via N-terminal) with CLTC. Interacts with NOD1. Interacts with NOD2. Interacts with TUFM. Interacts with TRIM16. Interacts (via WD repeats) with SPATA33. Interacts with IRGM. In terms of processing, proteolytic cleavage by activated CASP3 leads to degradation and may regulate autophagy upon cellular stress and apoptotic stimuli. Phosphorylation at Ser-139 promotes association with the ATG12-ATG5 conjugate to form the ATG12-ATG5-ATG16L1 complex.

It localises to the cytoplasm. It is found in the preautophagosomal structure membrane. Its subcellular location is the endosome membrane. The protein localises to the lysosome membrane. Functionally, plays an essential role in both canonical and non-canonical autophagy: interacts with ATG12-ATG5 to mediate the lipidation to ATG8 family proteins (MAP1LC3A, MAP1LC3B, MAP1LC3C, GABARAPL1, GABARAPL2 and GABARAP). Acts as a molecular hub, coordinating autophagy pathways via distinct domains that support either canonical or non-canonical signaling. During canonical autophagy, interacts with ATG12-ATG5 to mediate the conjugation of phosphatidylethanolamine (PE) to ATG8 proteins, to produce a membrane-bound activated form of ATG8. Thereby, controls the elongation of the nascent autophagosomal membrane. As part of the ATG8 conjugation system with ATG5 and ATG12, required for recruitment of LRRK2 to stressed lysosomes and induction of LRRK2 kinase activity in response to lysosomal stress. Also involved in non-canonical autophagy, a parallel pathway involving conjugation of ATG8 proteins to single membranes at endolysosomal compartments, probably by catalyzing conjugation of phosphatidylserine (PS) to ATG8. Non-canonical autophagy plays a key role in epithelial cells to limit lethal infection by influenza A (IAV) virus. Regulates mitochondrial antiviral signaling (MAVS)-dependent type I interferon (IFN-I) production. Negatively regulates NOD1- and NOD2-driven inflammatory cytokine response. Instead, promotes an autophagy-dependent antibacterial pathway together with NOD1 or NOD2. Plays a role in regulating morphology and function of Paneth cell. The sequence is that of Autophagy-related protein 16-1 from Pongo abelii (Sumatran orangutan).